Reading from the N-terminus, the 952-residue chain is Protein translocase subunit SecA (952 aa).

ATP-binding positions include glutamine 135, 153 to 157 (GEGKT), and aspartate 575. A compositionally biased stretch (low complexity) spans 907-921 (AAPAAAIPGVSAKAA). Positions 907–946 (AAPAAAIPGVSAKAATQSTTPAAKEIGRNDPCPCGSGKKY) are disordered. Zn(2+) is bound by residues cysteine 938, cysteine 940, cysteine 949, and cysteine 950.

This sequence belongs to the SecA family. In terms of assembly, monomer and homodimer. Part of the essential Sec protein translocation apparatus which comprises SecA, SecYEG and auxiliary proteins SecDF. Other proteins may also be involved. The cofactor is Zn(2+).

Its subcellular location is the cell membrane. The protein resides in the cytoplasm. The catalysed reaction is ATP + H2O + cellular proteinSide 1 = ADP + phosphate + cellular proteinSide 2.. In terms of biological role, part of the Sec protein translocase complex. Interacts with the SecYEG preprotein conducting channel. Has a central role in coupling the hydrolysis of ATP to the transfer of proteins into and across the cell membrane, serving as an ATP-driven molecular motor driving the stepwise translocation of polypeptide chains across the membrane. In Dehalococcoides mccartyi (strain CBDB1), this protein is Protein translocase subunit SecA.